The following is a 435-amino-acid chain: 3-phosphoshikimate 1-carboxyvinyltransferase (435 aa).

3-phosphoshikimate is bound by residues Lys-23, Ser-24, and Arg-28. Lys-23 is a phosphoenolpyruvate binding site. 2 residues coordinate phosphoenolpyruvate: Gly-97 and Arg-125. Residues Ser-170, Ser-171, Gln-172, Ser-198, Asp-314, Asn-338, and Lys-342 each contribute to the 3-phosphoshikimate site. Gln-172 contacts phosphoenolpyruvate. The active-site Proton acceptor is the Asp-314. Phosphoenolpyruvate is bound by residues Arg-346, Arg-388, and Lys-413.

It belongs to the EPSP synthase family. Monomer.

It is found in the cytoplasm. It catalyses the reaction 3-phosphoshikimate + phosphoenolpyruvate = 5-O-(1-carboxyvinyl)-3-phosphoshikimate + phosphate. The protein operates within metabolic intermediate biosynthesis; chorismate biosynthesis; chorismate from D-erythrose 4-phosphate and phosphoenolpyruvate: step 6/7. Its function is as follows. Catalyzes the transfer of the enolpyruvyl moiety of phosphoenolpyruvate (PEP) to the 5-hydroxyl of shikimate-3-phosphate (S3P) to produce enolpyruvyl shikimate-3-phosphate and inorganic phosphate. The sequence is that of 3-phosphoshikimate 1-carboxyvinyltransferase from Sodalis glossinidius (strain morsitans).